We begin with the raw amino-acid sequence, 202 residues long: FMN reductase (NADH) RutF 1 (202 aa).

Residues 168–202 (PRTPRSGSAPAEPARAPRAVGARPAEGPALALRSA) are disordered. Residues 171-196 (PRSGSAPAEPARAPRAVGARPAEGPA) show a composition bias toward low complexity.

This sequence belongs to the non-flavoprotein flavin reductase family. RutF subfamily.

It carries out the reaction FMNH2 + NAD(+) = FMN + NADH + 2 H(+). Functionally, catalyzes the reduction of FMN to FMNH2 which is used to reduce pyrimidine by RutA via the Rut pathway. The sequence is that of FMN reductase (NADH) RutF 1 from Methylorubrum extorquens (strain PA1) (Methylobacterium extorquens).